The primary structure comprises 201 residues: Charged multivesicular body protein 6 (201 aa).

The N-myristoyl glycine moiety is linked to residue Gly2. Residues 10–145 adopt a coiled-coil conformation; that stretch reads QSRVTEQDKA…YQRQIDELLA (136 aa). Residue Ser119 is modified to Phosphoserine. Residue Thr130 is modified to Phosphothreonine. The Type-2 MIT-interacting motif motif lies at 168–179; sequence IELPEVPSEPLP. The tract at residues 171-201 is disordered; it reads PEVPSEPLPEKIPEDVPVKARPRQAELVAAS. Basic and acidic residues predominate over residues 178-188; the sequence is LPEKIPEDVPV.

This sequence belongs to the SNF7 family. In terms of assembly, probable core component of the endosomal sorting required for transport complex III (ESCRT-III). ESCRT-III components are thought to multimerize to form a flat lattice on the perimeter membrane of the endosome. Several assembly forms of ESCRT-III may exist that interact and act sequentially. Interacts with VPS4A; the interaction is direct. Interacts with VPS4B; the interaction is direct. Interacts with CHMP4A, CHMP4B and CHMP4C. Interacts with SNF8, VPS25 and VPS36. ISGylated in a CHMP5-dependent manner. Isgylation weakens its interaction with VPS4A.

Its subcellular location is the endomembrane system. It localises to the endosome membrane. The protein localises to the late endosome membrane. It is found in the membrane. In terms of biological role, probable core component of the endosomal sorting required for transport complex III (ESCRT-III) which is involved in multivesicular bodies (MVBs) formation and sorting of endosomal cargo proteins into MVBs. MVBs contain intraluminal vesicles (ILVs) that are generated by invagination and scission from the limiting membrane of the endosome and mostly are delivered to lysosomes enabling degradation of membrane proteins, such as stimulated growth factor receptors, lysosomal enzymes and lipids. The MVB pathway appears to require the sequential function of ESCRT-O, -I,-II and -III complexes. ESCRT-III proteins mostly dissociate from the invaginating membrane before the ILV is released. The ESCRT machinery also functions in topologically equivalent membrane fission events, such as the terminal stages of cytokinesis and the budding of enveloped viruses (lentiviruses). ESCRT-III proteins are believed to mediate the necessary vesicle extrusion and/or membrane fission activities, possibly in conjunction with the AAA ATPase VPS4. In the ESCRT-III complex, it probably serves as an acceptor for the ESCRT-II complex on endosomal membrane. This chain is Charged multivesicular body protein 6 (CHMP6), found in Pongo abelii (Sumatran orangutan).